The chain runs to 261 residues: MTHQTHAYHMVNPSPWPLTGALSALLMTSGLAMWFHFNSTILLMIGLTTNTLTMYQWWRDVIRESTFQGHHTPTVQKGLRYGMILFIISEVLFFTGFFWAFYHSSLAPTPELGGCWPPTGIHPLNPLEVPLLNTSVLLASGVSITWAHHSLMEGNRYPMLQALFITIALGVYFTLLQASEYYEAPFTISDGVYGSTFFVATGFHGLHVIIGSTFLIVCFFRQLKFHFTSNHHFGFEAAAWYWHFVDVVWLFLYVSIYWWGS.

Topologically, residues 1–15 are mitochondrial matrix; it reads MTHQTHAYHMVNPSP. A helical transmembrane segment spans residues 16-34; the sequence is WPLTGALSALLMTSGLAMW. At 35-40 the chain is on the mitochondrial intermembrane side; sequence FHFNST. Residues 41 to 66 traverse the membrane as a helical segment; it reads ILLMIGLTTNTLTMYQWWRDVIREST. Residues 67-72 are Mitochondrial matrix-facing; it reads FQGHHT. The helical transmembrane segment at 73 to 105 threads the bilayer; sequence PTVQKGLRYGMILFIISEVLFFTGFFWAFYHSS. The Mitochondrial intermembrane segment spans residues 106-128; the sequence is LAPTPELGGCWPPTGIHPLNPLE. A helical membrane pass occupies residues 129–152; sequence VPLLNTSVLLASGVSITWAHHSLM. Topologically, residues 153-155 are mitochondrial matrix; it reads EGN. A helical membrane pass occupies residues 156-183; the sequence is RYPMLQALFITIALGVYFTLLQASEYYE. Over 184–190 the chain is Mitochondrial intermembrane; sequence APFTISD. A helical membrane pass occupies residues 191–223; sequence GVYGSTFFVATGFHGLHVIIGSTFLIVCFFRQL. At 224–232 the chain is on the mitochondrial matrix side; that stretch reads KFHFTSNHH. The helical transmembrane segment at 233 to 256 threads the bilayer; sequence FGFEAAAWYWHFVDVVWLFLYVSI. Residues 257–261 lie on the Mitochondrial intermembrane side of the membrane; the sequence is YWWGS.

The protein belongs to the cytochrome c oxidase subunit 3 family. As to quaternary structure, component of the cytochrome c oxidase (complex IV, CIV), a multisubunit enzyme composed of 14 subunits. The complex is composed of a catalytic core of 3 subunits MT-CO1, MT-CO2 and MT-CO3, encoded in the mitochondrial DNA, and 11 supernumerary subunits COX4I, COX5A, COX5B, COX6A, COX6B, COX6C, COX7A, COX7B, COX7C, COX8 and NDUFA4, which are encoded in the nuclear genome. The complex exists as a monomer or a dimer and forms supercomplexes (SCs) in the inner mitochondrial membrane with NADH-ubiquinone oxidoreductase (complex I, CI) and ubiquinol-cytochrome c oxidoreductase (cytochrome b-c1 complex, complex III, CIII), resulting in different assemblies (supercomplex SCI(1)III(2)IV(1) and megacomplex MCI(2)III(2)IV(2)).

The protein resides in the mitochondrion inner membrane. It carries out the reaction 4 Fe(II)-[cytochrome c] + O2 + 8 H(+)(in) = 4 Fe(III)-[cytochrome c] + 2 H2O + 4 H(+)(out). Its function is as follows. Component of the cytochrome c oxidase, the last enzyme in the mitochondrial electron transport chain which drives oxidative phosphorylation. The respiratory chain contains 3 multisubunit complexes succinate dehydrogenase (complex II, CII), ubiquinol-cytochrome c oxidoreductase (cytochrome b-c1 complex, complex III, CIII) and cytochrome c oxidase (complex IV, CIV), that cooperate to transfer electrons derived from NADH and succinate to molecular oxygen, creating an electrochemical gradient over the inner membrane that drives transmembrane transport and the ATP synthase. Cytochrome c oxidase is the component of the respiratory chain that catalyzes the reduction of oxygen to water. Electrons originating from reduced cytochrome c in the intermembrane space (IMS) are transferred via the dinuclear copper A center (CU(A)) of subunit 2 and heme A of subunit 1 to the active site in subunit 1, a binuclear center (BNC) formed by heme A3 and copper B (CU(B)). The BNC reduces molecular oxygen to 2 water molecules using 4 electrons from cytochrome c in the IMS and 4 protons from the mitochondrial matrix. This Raphicerus campestris (Steenbok) protein is Cytochrome c oxidase subunit 3 (MT-CO3).